The primary structure comprises 86 residues: Anti-adapter protein IraP (86 aa).

The stretch at 1 to 42 forms a coiled coil; the sequence is MKNLIAELLVKLAQKEEESKELVAQVEALEIVVTALLRQMAQ.

It belongs to the IraP family. Interacts with RssB.

The protein resides in the cytoplasm. Inhibits RpoS proteolysis by regulating RssB activity, thereby increasing the stability of the sigma stress factor RpoS especially during phosphate starvation, but also in stationary phase and during nitrogen starvation. Its effect on RpoS stability is due to its interaction with RssB, which probably blocks the interaction of RssB with RpoS, and the consequent delivery of the RssB-RpoS complex to the ClpXP protein degradation pathway. This Enterobacter sp. (strain 638) protein is Anti-adapter protein IraP.